Here is a 148-residue protein sequence, read N- to C-terminus: MKVILLEPLENLGDVGQVVDVKPGYARNYLLPRGLAVLATESNLKALEARIRAQAKRLAERKAEAERLKEILENLTLTIPVRAGETKIYGSVTAKDIAEALSRQHGVTIDPKRLALEKPIKELGEYVLTYKPHPEVPIQLKVSVVAQE.

As to quaternary structure, part of the 50S ribosomal subunit.

Binds to the 23S rRNA. Extends more that 50 Angstroms beyond the surface of the 70S ribosome. This chain is Large ribosomal subunit protein bL9 (rplI), found in Thermus thermophilus (strain ATCC 27634 / DSM 579 / HB8).